A 112-amino-acid chain; its full sequence is Protein preY, mitochondrial (112 aa).

The transit peptide at 1–34 directs the protein to the mitochondrion; sequence MLSATCRRLAPALRRLRALSAVAGRFLQVPGARL. One can recognise a TRM112 domain in the interval 49–95; that stretch reads HPALLQFLVCPLSKKPLRYEASTNELVNEELGIAYPIIDGIPNMIPQ.

The protein belongs to the PREY family. In terms of assembly, interacts (via TRM112 domain) with NDUFAF5; the interaction is direct and stabilizes NDUFAF5 protein. Interacts with COQ5; the interaction is direct, stabilizes COQ5 protein and associates PYURF with COQ enzyme complex.

The protein localises to the mitochondrion. In terms of biological role, in mitochondria, S-adenosylmethionine-dependent methyltransferase chaperone that supports both coenzyme Q biosynthesis, by stabilizing its components, such as COQ5, and NADH:ubiquinone oxidoreductase complex (complex I, MT-ND1) assembly, by stabilizing complex I assembly factors, such as NDUFAF5. The protein is Protein preY, mitochondrial (Pyurf) of Mus musculus (Mouse).